Consider the following 333-residue polypeptide: DNA-directed RNA polymerase subunit alpha (333 aa).

The alpha N-terminal domain (alpha-NTD) stretch occupies residues 1 to 234; sequence MQISVNEFLT…QQLAAFVDLK (234 aa). The tract at residues 248–333 is alpha C-terminal domain (alpha-CTD); the sequence is IDPILLRPVD…SLKKDDKATA (86 aa).

This sequence belongs to the RNA polymerase alpha chain family. As to quaternary structure, homodimer. The RNAP catalytic core consists of 2 alpha, 1 beta, 1 beta' and 1 omega subunit. When a sigma factor is associated with the core the holoenzyme is formed, which can initiate transcription.

The catalysed reaction is RNA(n) + a ribonucleoside 5'-triphosphate = RNA(n+1) + diphosphate. DNA-dependent RNA polymerase catalyzes the transcription of DNA into RNA using the four ribonucleoside triphosphates as substrates. The polypeptide is DNA-directed RNA polymerase subunit alpha (Pseudomonas fluorescens (strain Pf0-1)).